Consider the following 344-residue polypeptide: MLDVPVLLAAVSPDSPCGDDLEYDAAFLELERIAQGQPERQMGDAVLPAEPPEWPRVRALASELFGRSKDLRVANLLLQSNVALDGLDGLADGLLLVRELLGQYWDGVYPLLDADDDNDPTFRINALTGLVAEPLLQLVWAIPLVRSRAFGPVNLRAALNAAGLQRFASETLSPEQIAGAFADADADALAATRRALDGAQEHALAIESGVAERVGSAQGLDLGPLRQLLRQALQVFDLYGPQGAGESLAPGAEAVADEQVGAAPVAAVAAPAPRASGEIANREDVLRQLDRLLEYYVRHEPSSPVPVLLKRAKTLVTADFAEIVRNLIPDGISQFETLRGPESE.

Homododecamer. Interacts with TssB1 and TssC1. Interacts with TssK1 and TssF1.

In terms of biological role, core component of the H1 type VI (H1-T6SS) secretion system that plays a role in the release of toxins targeting both eukaryotic and prokaryotic species. Forms a dodecameric ring-shaped structure located at one end of the T6SS sheath. May properly attach the pre-assembled sheath onto the baseplate and/or stabilize the sheaths tubular structure. This chain is Type VI secretion system component TssA1, found in Pseudomonas aeruginosa (strain ATCC 15692 / DSM 22644 / CIP 104116 / JCM 14847 / LMG 12228 / 1C / PRS 101 / PAO1).